Here is a 253-residue protein sequence, read N- to C-terminus: Ubiquinone/menaquinone biosynthesis C-methyltransferase UbiE (253 aa).

Residues T76, D97, and 125-126 (NA) contribute to the S-adenosyl-L-methionine site.

Belongs to the class I-like SAM-binding methyltransferase superfamily. MenG/UbiE family.

It carries out the reaction a 2-demethylmenaquinol + S-adenosyl-L-methionine = a menaquinol + S-adenosyl-L-homocysteine + H(+). It catalyses the reaction a 2-methoxy-6-(all-trans-polyprenyl)benzene-1,4-diol + S-adenosyl-L-methionine = a 5-methoxy-2-methyl-3-(all-trans-polyprenyl)benzene-1,4-diol + S-adenosyl-L-homocysteine + H(+). Its pathway is quinol/quinone metabolism; menaquinone biosynthesis; menaquinol from 1,4-dihydroxy-2-naphthoate: step 2/2. It participates in cofactor biosynthesis; ubiquinone biosynthesis. In terms of biological role, methyltransferase required for the conversion of demethylmenaquinol (DMKH2) to menaquinol (MKH2) and the conversion of 2-polyprenyl-6-methoxy-1,4-benzoquinol (DDMQH2) to 2-polyprenyl-3-methyl-6-methoxy-1,4-benzoquinol (DMQH2). This Stenotrophomonas maltophilia (strain R551-3) protein is Ubiquinone/menaquinone biosynthesis C-methyltransferase UbiE.